The sequence spans 569 residues: Probable santalene synthase (569 aa).

Residues Arg-284, Asp-321, Asp-325, Arg-460, and Asn-463 each contribute to the (2E)-geranyl diphosphate site. The Mg(2+) site is built by Asp-321 and Asp-325. Residues 321 to 325 (DDAYD) carry the DDXXD motif motif. Asn-463, Thr-467, and Glu-471 together coordinate Mg(2+).

It belongs to the terpene synthase family. Tpsb subfamily. Mg(2+) is required as a cofactor. Requires Mn(2+) as cofactor.

Its function is as follows. Catalyzes the formation of santalene. The polypeptide is Probable santalene synthase (SSY) (Santalum murrayanum (Bitter quandong)).